The sequence spans 761 residues: MGIGHNPRLCLVPLILGLLCGGVGMTPLPEAGPQSPCSLEGVEIKGGSFRLLKAGQVLEYLCPSGFYPYPTQIRTCRSTGSWSTLQTQDRKIVKRAECKAIRCPRPQDFENGEYWPRAAYYNLSDEISFRCYDGYTLRGSANRTCQGNGRWDGETAICDDGATYCPNPGIPLGTRKVGSQYRLEDRVTYYCNRGLTLRGSEQRTCLEGGSWSGTEPSCQDSFMYDTPAEVAEAFLSSLTETIEGVDAEDGHSPGEQQKRKIVLDPSGSMNIYLVLDGSDSVGAHNFTGAKNCLRDFIEKVASYGVKPKYGLVTYATEPKVLIRVSDPKSSEADWVTDQLNQINYADHKLKAGTNTKRALLEVYNMMSREVNQFKETWNRTRHVIIIMTDGLHNMGGDPVTVIHDIRYLLDIGRNRKNPREDYLDIYVFGVGPLVNQENINALASKKDKEKHVFKLQGMENLEDVFVQMLDESRTLGLCGMVWEHKDGTAYHKQPWQAKISVTRPSKGHESCMGAIVSEYFVLTAAHCFTVDDEKHSIKVSLGGQRKEWEVKEILFHPKYDLNAKKAKGIPEFYDYDVALVRLKEKLKYETTIRPICLPCTEGSIQALRLPRSTTCQQQMQELLPAKDIEALFVSESKKTLTRKAVYIKNGDKKASCERDALRAPGYEKVKDVSEVVTPRFLCTGGVDPYADPNTCKGDSGGPLIIHKRSRFIQVGVISWGVVDVCKRPQQVPGYARDFHINLYQVLPWLKEKLQNEDLGFL.

A signal peptide spans Met1–Met25. 3 consecutive Sushi domains span residues Ser35–Ala100, Ile101–Asp160, and Thr163–Asp220. Disulfide bonds link Cys37/Cys76, Cys62/Cys98, Cys103/Cys145, Cys131/Cys158, Cys165/Cys205, and Cys191/Cys218. N-linked (GlcNAc...) asparagine glycosylation is found at Asn122 and Asn142. In terms of domain architecture, VWFA spans Asn270–Leu469. Mg(2+) is bound by residues Ser278 and Ser280. The N-linked (GlcNAc...) asparagine glycan is linked to Asn285. Residue Thr353 coordinates Mg(2+). Asn378 is a glycosylation site (N-linked (GlcNAc...) asparagine). The 278-residue stretch at Leu477 to Gln754 folds into the Peptidase S1 domain. 5 cysteine pairs are disulfide-bonded: Cys478-Cys596, Cys511-Cys527, Cys599-Cys615, Cys656-Cys682, and Cys695-Cys725. Catalysis depends on charge relay system residues His526 and Asp576. Catalysis depends on Ser699, which acts as the Charge relay system.

The protein belongs to the peptidase S1 family. Monomer. Interacts with complement C3b; this interaction is dependent on the presence of Mg(2+). In terms of assembly, catalytic component of the C3 convertase of the alternative complement pathway, also named C3bBb, composed of complement factor B Bb and complement C3b. Catalytic component of the C5 convertase of the alternative complement pathway, also named C3bBb3b, composed of complement factor B Bb and additional molecules of complement C3b. Interacts to CFP; this interaction contributes to the stabilization of the active C3-convertase enzyme complex. It depends on Mg(2+) as a cofactor. Mn(2+) serves as cofactor. Post-translationally, cleaved by CFD following activation of the alternative complement system, generating Ba and Bb chains. Cleavage and activation takes place when CFB is already associated with complement C3b.

The protein resides in the secreted. Its subcellular location is the cell surface. It catalyses the reaction Cleavage of Arg-|-Ser bond in complement component C3 alpha-chain to yield C3a and C3b, and Arg-|-Xaa bond in complement component C5 alpha-chain to yield C5a and C5b.. Its function is as follows. Precursor of the catalytic component of the C3 and C5 convertase complexes of the alternative pathway of the complement system, a cascade of proteins that leads to phagocytosis and breakdown of pathogens and signaling that strengthens the adaptive immune system. The alternative complement pathway acts as an amplification loop that enhances other complement pathways (classical, lectin and GZMK) by promoting formation of additional C3 and C5 convertases. CFB is cleaved and activated by CFD to generate Ba and Bb chains; Bb chain constituting the catalytic component of the C3 and C5 convertases. Functionally, serine protease component of the complement C3 and C5 convertase complexes of the alternative complement pathway. Following cleavage and activation by factor D (CFD), forms the C3 convertase together with complement C3b. As part of the C3 convertase, cleaves and activates C3 into C3a anaphylatoxin and C3b opsonin, the next components of the complement pathways. When an additional complement C3b molecule binds to the C3 convertase, forms the C5 convertase, which cleaves and activates C5 into C5a anaphylatoxin and C5b component of the membrane attack complex. In terms of biological role, involved in proliferation and differentiation of preactivated B-lymphocytes, rapid spreading of peripheral blood monocytes, stimulation of lymphocyte blastogenesis and lysis of erythrocytes. The polypeptide is Complement factor B (CFB) (Bos taurus (Bovine)).